A 351-amino-acid chain; its full sequence is MLSGMALCRTRNCRFMMGEDGRRMRKCVLLLYQPCHLSTNSKPKSMLSLIASKAKYANEKYEHFLERKFPNFYLLYSTFMKGFRMLMTEAKEVGRIKQRMNHQGIPFHQLPYREMEKLRQFRRDIIKAAPVVIISIPPFANYLVFVLMYFFPRQLLIRHFWTPKQREEFLDIYHRMRVEAYPEILDGLLNAVPKLSERNLRNQMFQLCTQVQHGTHPQVENLHAVCTAFSGPPLGMKRLDVQQMKALSRVMFLTPHLPAFLLQHRLGSHICEIQNLDCALLKLGVNELSEEELKRACYIRGLNSTHLSREDCETWLHCWLQLSSMLKVSEASLLLHCMVLLSANYLQSIKQ.

Over 1 to 130 the chain is Cytoplasmic; that stretch reads MLSGMALCRT…FRRDIIKAAP (130 aa). A helical transmembrane segment spans residues 131-151; sequence VVIISIPPFANYLVFVLMYFF. Topologically, residues 152–351 are mitochondrial intermembrane; it reads PRQLLIRHFW…SANYLQSIKQ (200 aa). A Letm1 RBD domain is found at 172-351; that stretch reads IYHRMRVEAY…SANYLQSIKQ (180 aa).

It is found in the mitochondrion outer membrane. Its subcellular location is the nucleus. The protein localises to the mitochondrion inner membrane. Functionally, may play an essential role for mitochondrial structure and function. This is LETM1 domain-containing protein 1 from Xenopus tropicalis (Western clawed frog).